The primary structure comprises 310 residues: N-acetyl-gamma-glutamyl-phosphate reductase (310 aa).

Cysteine 117 is an active-site residue.

Belongs to the NAGSA dehydrogenase family. Type 2 subfamily.

The protein resides in the cytoplasm. It carries out the reaction N-acetyl-L-glutamate 5-semialdehyde + phosphate + NADP(+) = N-acetyl-L-glutamyl 5-phosphate + NADPH + H(+). It functions in the pathway amino-acid biosynthesis; L-arginine biosynthesis; N(2)-acetyl-L-ornithine from L-glutamate: step 3/4. In terms of biological role, catalyzes the NADPH-dependent reduction of N-acetyl-5-glutamyl phosphate to yield N-acetyl-L-glutamate 5-semialdehyde. This chain is N-acetyl-gamma-glutamyl-phosphate reductase, found in Rhizobium johnstonii (strain DSM 114642 / LMG 32736 / 3841) (Rhizobium leguminosarum bv. viciae).